The following is a 201-amino-acid chain: MSDREGLFGGDDPFEIARKWLAEATETEINDPNAIALATVDASGMPNSRMVLLKEIEDAAFVFYTNYESAKAQEIEASGTASFVMHWKSLRRQIRVRGHVTKENGPQADEYFASRSLKSRLGAWASKQSQPLASRSALMAEVAKITAQKGPNPKRPEFWGGYRITPIEIEFWADGAFRLHDRFVWRKNTSHDNWTITRLSP.

Residues 49 to 54 (RMVLLK), 64 to 65 (YT), Lys71, and Gln93 each bind FMN. Lys54 is a substrate binding site. Substrate-binding residues include Tyr111, Arg115, and Ser119. FMN-binding positions include 128–129 (QS) and Trp172. 178–180 (RLH) is a binding site for substrate. Arg182 provides a ligand contact to FMN.

Belongs to the pyridoxamine 5'-phosphate oxidase family. As to quaternary structure, homodimer. The cofactor is FMN.

It catalyses the reaction pyridoxamine 5'-phosphate + O2 + H2O = pyridoxal 5'-phosphate + H2O2 + NH4(+). It carries out the reaction pyridoxine 5'-phosphate + O2 = pyridoxal 5'-phosphate + H2O2. Its pathway is cofactor metabolism; pyridoxal 5'-phosphate salvage; pyridoxal 5'-phosphate from pyridoxamine 5'-phosphate: step 1/1. It functions in the pathway cofactor metabolism; pyridoxal 5'-phosphate salvage; pyridoxal 5'-phosphate from pyridoxine 5'-phosphate: step 1/1. In terms of biological role, catalyzes the oxidation of either pyridoxine 5'-phosphate (PNP) or pyridoxamine 5'-phosphate (PMP) into pyridoxal 5'-phosphate (PLP). This chain is Pyridoxine/pyridoxamine 5'-phosphate oxidase, found in Ruegeria sp. (strain TM1040) (Silicibacter sp.).